The primary structure comprises 211 residues: Arginine exporter protein ArgO (211 aa).

6 consecutive transmembrane segments (helical) span residues 1 to 21 (MFTYYFQGLALGAAMILPLGP), 37 to 57 (LMIALLCAVSDLLLICAGIFG), 68 to 88 (LLAIVTWGGVAFLLWYGFGAL), 111 to 131 (IIITMLAVTWLNPHVYLDTFV), 147 to 167 (WFALGTISASFLWFFGLALLA), and 182 to 202 (IINIVVGAVMWFIAFQLAKEG).

The protein belongs to the LysE/ArgO transporter (TC 2.A.75) family.

The protein localises to the cell inner membrane. The enzyme catalyses L-arginine(in) = L-arginine(out). Functionally, involved in the export of arginine. Important to control the intracellular level of arginine and the correct balance between arginine and lysine. This is Arginine exporter protein ArgO from Klebsiella pneumoniae (strain 342).